The primary structure comprises 541 residues: Apolipoprotein N-acyltransferase (541 aa).

6 consecutive transmembrane segments (helical) span residues 21-41 (LSGF…WYSL), 54-74 (LFVS…SWML), 82-102 (LIYL…SGFS), 116-136 (FLWS…YGIF), 157-177 (FGGF…NMSF), and 189-209 (MLWV…YEYL). The CN hydrolase domain maps to 220–499 (LRVAVVQPAH…SGVLETSLPL (280 aa)). Residue Glu-264 is the Proton acceptor of the active site. Lys-349 is a catalytic residue. Cys-404 serves as the catalytic Nucleophile. Residues 512–532 (YPMILIAFCAVSYLGGGFLGY) form a helical membrane-spanning segment.

This sequence belongs to the CN hydrolase family. Apolipoprotein N-acyltransferase subfamily.

It localises to the cell inner membrane. It carries out the reaction N-terminal S-1,2-diacyl-sn-glyceryl-L-cysteinyl-[lipoprotein] + a glycerophospholipid = N-acyl-S-1,2-diacyl-sn-glyceryl-L-cysteinyl-[lipoprotein] + a 2-acyl-sn-glycero-3-phospholipid + H(+). It functions in the pathway protein modification; lipoprotein biosynthesis (N-acyl transfer). Its function is as follows. Catalyzes the phospholipid dependent N-acylation of the N-terminal cysteine of apolipoprotein, the last step in lipoprotein maturation. This is Apolipoprotein N-acyltransferase from Chlamydia pneumoniae (Chlamydophila pneumoniae).